Reading from the N-terminus, the 721-residue chain is Ribosomal RNA large subunit methyltransferase K/L (721 aa).

The 112-residue stretch at 56–167 folds into the THUMP domain; sequence GMYKACLWSR…REVVTVSIDL (112 aa).

The protein belongs to the methyltransferase superfamily. RlmKL family.

Its subcellular location is the cytoplasm. The catalysed reaction is guanosine(2445) in 23S rRNA + S-adenosyl-L-methionine = N(2)-methylguanosine(2445) in 23S rRNA + S-adenosyl-L-homocysteine + H(+). The enzyme catalyses guanosine(2069) in 23S rRNA + S-adenosyl-L-methionine = N(2)-methylguanosine(2069) in 23S rRNA + S-adenosyl-L-homocysteine + H(+). Functionally, specifically methylates the guanine in position 2445 (m2G2445) and the guanine in position 2069 (m7G2069) of 23S rRNA. The polypeptide is Ribosomal RNA large subunit methyltransferase K/L (Marinomonas sp. (strain MWYL1)).